The chain runs to 185 residues: Sulfopyruvate decarboxylase subunit beta (185 aa).

It belongs to the TPP enzyme family. In terms of assembly, heterododecamer composed of 6 subunits alpha and 6 subunits beta. It depends on thiamine diphosphate as a cofactor.

It catalyses the reaction 3-sulfopyruvate + H(+) = sulfoacetaldehyde + CO2. Its pathway is cofactor biosynthesis; coenzyme M biosynthesis; sulfoacetaldehyde from phosphoenolpyruvate and sulfite: step 4/4. In terms of biological role, involved in the biosynthesis of the coenzyme M (2-mercaptoethanesulfonic acid). Catalyzes the decarboxylation of sulfopyruvate to sulfoacetaldehyde. The protein is Sulfopyruvate decarboxylase subunit beta of Methanococcus maripaludis (strain DSM 14266 / JCM 13030 / NBRC 101832 / S2 / LL).